The chain runs to 417 residues: UPF0761 membrane protein Veis_3782 (417 aa).

The next 6 membrane-spanning stretches (helical) occupy residues 54-74 (ILAL…FPIF), 111-131 (GLGL…ILTI), 151-171 (VLIY…SLAL), 192-212 (FLFD…LYHY), 226-246 (GGLF…LYLG), and 261-281 (LPIL…GAVV).

This sequence belongs to the UPF0761 family.

The protein resides in the cell inner membrane. This is UPF0761 membrane protein Veis_3782 from Verminephrobacter eiseniae (strain EF01-2).